The following is a 1137-amino-acid chain: MTMTANKNSSITHGAGGTKAPRGTLSRSQSVSPPPVLSPPRSPIYPLSDSETSACRYPSHSSSRVLLKDRHPPAPSPQNPQDPSPDTSPPTCPFKTASFGYLDRSPSACKRDAQKESVQGAAQDVAGVAACLPLAQSTPFPGPAAGPRGVLLTRTGTRAHSLGIREKISAWEGRREASPRMSMCGEKREGSGSEWAASEGCPSLGCPSVVPSPCSSEKTFDFKGLRRMSRTFSECSYPETEEEGEALPVRDSFYRLEKRLGRSEPSAFLRGHGSRKESSAVLSRIQKIEQVLKEQPGRGLPQLPSSCYSVDRGKRKTGTLGSLEEPAGGASVSAGSRAVGVAGVAGEAGPPPEREGSGSTKPGTPGNSPSSQRLPSKSSLDPAVNPVPKPKRTFEYEADKNPKSKPSNGLPPSPTPAAPPPLPSTPAPPVTRRPKKDMRGHRKSQSRKSFEFEDASSLQSLYPSSPTENGTENQPKFGSKSTLEENAYEDIVGDLPKENPYEDVDLKSRRAGRKSQQLSENSLDSLHRMWSPQDRKYNSPPTQLSLKPNSQSLRSGNWSERKSHRLPRLPKRHSHDDMLLLAQLSLPSSPSSLNEDSLSTTSELLSSRRARRIPKLVQRINSIYNAKRGKKRLKKLSMSSIETASLRDENSESESDSDDRFKAHTQRLVHIQSMLKRAPSYRTLELELLEWQERELFEYFVVVSLKKKPSRNTYLPEVSYQFPKLDRPTKQMREAEERLKAIPQFCFPDAKDWLPVSEYSSETFSFMLTGEDGSRRFGYCRRLLPSGKGPRLPEVYCVISRLGCFGLFSKVLDEVERRRGISAALVYPFMRSLMESPFPAPGKTIKVKTFLPGAGNEVLELRRPMDSRLEHVDFECLFTCLSVRQLIRIFASLLLERRVIFVADKLSTLSSCSHAVVALLYPFSWQHTFIPVLPASMIDIVCCPTPFLVGLLSSSLPKLKELPVEEALMVNLGSDRFIRQMDDEDTLLPRKLQAALEQALERKNELISQDSDSDSDDECNTLNGLVSEVFIRFFVETVGHYSLFLTQSEKGERAFQREAFRKSVASKSIRRFLEVFMESQMFAGFIQDRELRKCRAKGLFEQRVEQYLEELPDTEQSGMNKFLRGLGNKMKFLHKKN.

The span at 1-12 (MTMTANKNSSIT) shows a compositional bias: polar residues. The tract at residues 1-99 (MTMTANKNSS…PTCPFKTASF (99 aa)) is disordered. A phosphoserine mark is found at Ser-30 and Ser-32. Residues 32 to 43 (SPPPVLSPPRSP) are compositionally biased toward pro residues. Polar residues predominate over residues 49–64 (DSETSACRYPSHSSSR). Over residues 73 to 92 (PAPSPQNPQDPSPDTSPPTC) the composition is skewed to pro residues. Thr-231 carries the phosphothreonine modification. A Phosphoserine modification is found at Ser-233. Residues 293 to 573 (KEQPGRGLPQ…HRLPRLPKRH (281 aa)) form a disordered region. Positions 324–348 (EEPAGGASVSAGSRAVGVAGVAGEA) are enriched in low complexity. Thr-364 bears the Phosphothreonine mark. Ser-368 is modified (phosphoserine). Over residues 368–380 (SPSSQRLPSKSSL) the composition is skewed to low complexity. The span at 392–402 (RTFEYEADKNP) shows a compositional bias: basic and acidic residues. The interval 401–447 (NPKSKPSNGLPPSPTPAAPPPLPSTPAPPVTRRPKKDMRGHRKSQSR) is interaction with ABL1. Over residues 409–431 (GLPPSPTPAAPPPLPSTPAPPVT) the composition is skewed to pro residues. Basic residues predominate over residues 432–446 (RRPKKDMRGHRKSQS). Residues 456–481 (SSLQSLYPSSPTENGTENQPKFGSKS) show a composition bias toward polar residues. A Phosphothreonine modification is found at Thr-482. Positions 495 to 508 (LPKENPYEDVDLKS) are enriched in basic and acidic residues. Polar residues-rich tracts occupy residues 514–524 (KSQQLSENSLD) and 539–558 (SPPT…SGNW). Phosphoserine is present on Ser-545. Over residues 562–573 (KSHRLPRLPKRH) the composition is skewed to basic residues. Phosphoserine occurs at positions 574 and 622. The tract at residues 641 to 661 (IETASLRDENSESESDSDDRF) is disordered. In terms of domain architecture, uDENN spans 698–846 (EYFVVVSLKK…PFPAPGKTIK (149 aa)). The cDENN domain maps to 868-1001 (RLEHVDFECL…LQAALEQALE (134 aa)). In terms of domain architecture, dDENN spans 1003–1096 (KNELISQDSD…QDRELRKCRA (94 aa)).

As to quaternary structure, interacts with ITSN1 and GRB2. Isoform 1 interacts with the SH3 domain of ABL1. Phosphorylated. Phosphorylation decreases ITSN1 binding. In terms of tissue distribution, widely expressed with the exception of peripheral blood lymphocytes. Isoform 1 is expressed in several epithelial and fibroblast (including tumorigenic) but absent in lymphoid cell lines (at protein level). Isoform 3 is expressed in primary cell or weakly tumorigenic but not in tumorigenic cell lines (at protein level).

The protein localises to the cytoplasm. It localises to the cell cortex. Its subcellular location is the cell membrane. It is found in the recycling endosome. May be involved in cytoskeletal organization and tumorogenicity. Seems to be involved in a signaling transduction pathway leading to activation of MAPK1/ERK2. Plays a role in EGFR trafficking from recycling endosomes back to the cell membrane. In terms of biological role, guanine nucleotide exchange factor (GEF) which may activate RAB9A and RAB9B. Promotes the exchange of GDP to GTP, converting inactive GDP-bound Rab proteins into their active GTP-bound form. Its function is as follows. May block ERK2 activation stimulated by ABL1. May alter cell morphology and cell growth. The polypeptide is DENN domain-containing protein 2B (Homo sapiens (Human)).